A 223-amino-acid polypeptide reads, in one-letter code: Probable glutathione S-transferase (223 aa).

The region spanning 2–81 (AEVKLLGFWY…YIDETFEGPS (80 aa)) is the GST N-terminal domain. Glutathione is bound by residues serine 12, lysine 39, valine 53, and 65–66 (ES). Residues 86 to 212 (DPYDRALARF…ELLAFFRARF (127 aa)) form the GST C-terminal domain.

It belongs to the GST superfamily. HSP26 family. In terms of tissue distribution, root tip-specific expression.

The enzyme catalyses RX + glutathione = an S-substituted glutathione + a halide anion + H(+). The sequence is that of Probable glutathione S-transferase from Nicotiana tabacum (Common tobacco).